Reading from the N-terminus, the 594-residue chain is MSGAIFAPLEGPGALDAASGHPLVCPLCHAQYERPCLLDCFHDFCAGCLRGRTADGRVACPLCQHQTVVKGPSGLPPVDRLLQFLVDSSGDGVEAVHCANCDLDCSKQDAETACFCNTCGQPLCARCRDETHRARMFARHDIVALGQRSRDVLQKCPLHAEPYLMFSTDKKSLLCIRCFRDLQGESRAHCVDLESAYVQGCERLEQAVLAVKALQAATREAIALLQAMVEEVRRSAEEEAAAIHALFDSVQEKLAERKALLLQAVQSQYEEKDQAFKEQLSHLATLLPTLQIHLVICSSFLSLANKAEFLDLGYELMERLQGVVTRPHRLRPAQSSKIASDYRAEFARCLEPLLLLGPRRATGAQGGANTLAGGSGPKVLMGPSCPSPVRKVSRSPVQKPTLPRSISTKVLLADGEDTPFAEHCRHYEDSYRGLQAEVQNLKDQVQELHRDLTKHHSLIRAEIMADILHRSLRLDAQIDSEYASVEGMRAVFQEIWEESYQRLAGEQEIYEAQLRDLFQLKQENAHLTTITKHITPYVRSIAKVKERLEPRFQASADDESENPQTAYDASRNGETPASLLLPGSVASAEPPFVN.

Residues 25–64 form an RING-type zinc finger; the sequence is CPLCHAQYERPCLLDCFHDFCAGCLRGRTADGRVACPLCQ. The B box-type; atypical zinc-finger motif lies at 93-145; that stretch reads VEAVHCANCDLDCSKQDAETACFCNTCGQPLCARCRDETHRARMFARHDIVAL. Zn(2+) is bound by residues C98, C101, C127, and H132. The tract at residues 369-400 is disordered; that stretch reads NTLAGGSGPKVLMGPSCPSPVRKVSRSPVQKP. The stretch at 424–458 forms a coiled coil; sequence CRHYEDSYRGLQAEVQNLKDQVQELHRDLTKHHSL. Residues 552–594 are disordered; that stretch reads FQASADDESENPQTAYDASRNGETPASLLLPGSVASAEPPFVN. Polar residues predominate over residues 562 to 575; it reads NPQTAYDASRNGET.

As to quaternary structure, interacts with the core-glycosylated, but not the fully glycosylated form of KCNH2/HERG. Interacts with DNAJA1 and HSPA8. Interacts (via the C-terminus) with HSPA1A; this interaction additively increases KCNH2 expression.

It localises to the cytoplasm. In terms of biological role, plays a role in cardiac repolarization possibly by stabilizing membrane expression of the potassium channel KCNH2/HERG, or by assisting its synthesis, folding or export from the endoplasmic reticulum, in a heat shock protein-dependent manner. This is RING finger protein 207 (RNF207) from Oryctolagus cuniculus (Rabbit).